We begin with the raw amino-acid sequence, 280 residues long: F-actin-capping protein subunit alpha (280 aa).

The protein belongs to the F-actin-capping protein alpha subunit family. In terms of assembly, heterodimer of an alpha and a beta subunit.

Its subcellular location is the cytoplasm. The protein resides in the cytoskeleton. Functionally, F-actin-capping proteins bind in a Ca(2+)-independent manner to the fast growing ends of actin filaments (barbed end) thereby blocking the exchange of subunits at these ends. Unlike other capping proteins (such as gelsolin and severin), these proteins do not sever actin filaments. The chain is F-actin-capping protein subunit alpha (CAP01) from Candida albicans (strain SC5314 / ATCC MYA-2876) (Yeast).